A 513-amino-acid polypeptide reads, in one-letter code: Aspartyl protease family protein 1 (513 aa).

The signal sequence occupies residues 1 to 21 (MVWYSSCRILFLGLLILLASS). Positions 104-445 (HYANVTVGTP…DREKLILGWK (342 aa)) constitute a Peptidase A1 domain. Residues Asp-122 and Asp-327 contribute to the active site. The interval 452-488 (GETSARTLPSNRSSSSARPPASSFDPEATNIPSQRPN) is disordered. Low complexity predominate over residues 455–474 (SARTLPSNRSSSSARPPASS). Ser-484 carries GPI-anchor amidated serine lipidation. The propeptide at 485-513 (QRPNTSTTSAAYSLSISLSLFFFSILAIL) is removed in mature form.

Belongs to the peptidase A1 family.

The protein resides in the cell membrane. Its function is as follows. Aspartyl protease. Not able to cleave BAG6. The chain is Aspartyl protease family protein 1 from Arabidopsis thaliana (Mouse-ear cress).